Consider the following 266-residue polypeptide: Interleukin-1 beta (266 aa).

The propeptide occupies 1–114 (MAAVPELTSE…KTDADNFMSD (114 aa)).

It belongs to the IL-1 family. Monomer. In its precursor form, weakly interacts with full-length MEFV; the mature cytokine does not interact at all. Interacts with integrins ITGAV:ITGBV and ITGA5:ITGB1; integrin-binding is required for IL1B signaling. Interacts with cargo receptor TMED10; the interaction is direct and is required for the secretion of IL1B mature form. Interacts with HSP90AB1; the interaction facilitates cargo translocation into the ERGIC. Interacts with HSP90B1; the interaction facilitates cargo translocation into the ERGIC.

It is found in the cytoplasm. The protein resides in the cytosol. It localises to the secreted. The protein localises to the lysosome. Its subcellular location is the extracellular exosome. Its function is as follows. Potent pro-inflammatory cytokine. Initially discovered as the major endogenous pyrogen, induces prostaglandin synthesis, neutrophil influx and activation, T-cell activation and cytokine production, B-cell activation and antibody production, and fibroblast proliferation and collagen production. Promotes Th17 differentiation of T-cells. Synergizes with IL12/interleukin-12 to induce IFNG synthesis from T-helper 1 (Th1) cells. Plays a role in angiogenesis by inducing VEGF production synergistically with TNF and IL6. Involved in transduction of inflammation downstream of pyroptosis: its mature form is specifically released in the extracellular milieu by passing through the gasdermin-D (GSDMD) pore. The sequence is that of Interleukin-1 beta (IL1B) from Canis lupus familiaris (Dog).